Here is a 265-residue protein sequence, read N- to C-terminus: UPF0354 protein ABC2771 (265 aa).

Belongs to the UPF0354 family.

The polypeptide is UPF0354 protein ABC2771 (Shouchella clausii (strain KSM-K16) (Alkalihalobacillus clausii)).